A 740-amino-acid polypeptide reads, in one-letter code: Transcription activator of gluconeogenesis NCU03938 (740 aa).

The disordered stretch occupies residues 1-66 (MPDDVGPAEA…KYDPKDPLRP (66 aa)). Over residues 19-37 (SDNEYDETEVTTKDDDDEK) the composition is skewed to acidic residues. Residues 52–65 (GDQKKKYDPKDPLR) are compositionally biased toward basic and acidic residues. The segment at residues 75-103 (CYACQRAHLTCGDERPCQRCIKRGLAEAC) is a DNA-binding region (zn(2)-C6 fungal-type). Disordered stretches follow at residues 333 to 405 (PAGP…RQRD), 532 to 579 (NSDT…KEQP), and 639 to 674 (APTA…PTGV). Residues 337–351 (TSLQSPSTENNSPQP) are compositionally biased toward polar residues. A PAS domain is found at 475 to 546 (ALFEHEEFMH…SISSKGGRGG (72 aa)). The segment covering 639 to 658 (APTASGGSGSSNGTVVNGGP) has biased composition (low complexity).

It belongs to the ERT1/acuK family.

The protein resides in the nucleus. In terms of biological role, transcription factor which regulates nonfermentable carbon utilization. Activator of gluconeogenetic genes. The chain is Transcription activator of gluconeogenesis NCU03938 from Neurospora crassa (strain ATCC 24698 / 74-OR23-1A / CBS 708.71 / DSM 1257 / FGSC 987).